The chain runs to 218 residues: ATP phosphoribosyltransferase (218 aa).

Belongs to the ATP phosphoribosyltransferase family. Short subfamily. As to quaternary structure, heteromultimer composed of HisG and HisZ subunits.

The protein localises to the cytoplasm. The enzyme catalyses 1-(5-phospho-beta-D-ribosyl)-ATP + diphosphate = 5-phospho-alpha-D-ribose 1-diphosphate + ATP. It functions in the pathway amino-acid biosynthesis; L-histidine biosynthesis; L-histidine from 5-phospho-alpha-D-ribose 1-diphosphate: step 1/9. Its function is as follows. Catalyzes the condensation of ATP and 5-phosphoribose 1-diphosphate to form N'-(5'-phosphoribosyl)-ATP (PR-ATP). Has a crucial role in the pathway because the rate of histidine biosynthesis seems to be controlled primarily by regulation of HisG enzymatic activity. This is ATP phosphoribosyltransferase from Lactiplantibacillus plantarum (strain ATCC BAA-793 / NCIMB 8826 / WCFS1) (Lactobacillus plantarum).